The following is a 518-amino-acid chain: MAVALGCAIQASLNQGSVFQEYDTDCEVFRQRFRQFQYREAAGPHEAFNKLWELCCQWLKPKMRSKEQILELLVLEQFLTILPTEIETWVREHCPENRERVVSLIEDLQRELEIPEQQVDMHDMLLEELAPVGTAHIPPTMHLESPALQVMGPAQEAPVAEAWIPQAGPPELNYSATGECQNFLDPGYPLPKLDMNFSLENREEPWVKELQDSKEMKQLLDSKIGFEIGIENEEDTSKQKKMETMYPFIVTLEGNALQGPILQKDYVQLENQWETPPEDLQRDLAKLVDQQNPTLGETPENSNLEEPLNPKPHKKKSPGEKPHRCPQCGKCFARKSQLTGHQRIHSGEEPHKCPECGKRFLRSSDLYRHQRLHTGERPYECTVCKKRFTRRSHLIGHQRTHSEEETYKCLECGKSFCHGSSLKRHLKTHTGEKPHRCHNCGKSFSRLTALTLHQRTHTEERPFKCNYCGKSFRQRPSLVIHLRIHTGEKPYKCTHCSKSFRQRAGLIMHQVTHFRGLI.

The 83-residue stretch at 30 to 112 (RQRFRQFQYR…SLIEDLQREL (83 aa)) folds into the SCAN box domain. The segment covering 292–304 (NPTLGETPENSNL) has biased composition (polar residues). Residues 292 to 325 (NPTLGETPENSNLEEPLNPKPHKKKSPGEKPHRC) are disordered. C2H2-type zinc fingers lie at residues 323–345 (HRCPQCGKCFARKSQLTGHQRIH), 351–373 (HKCPECGKRFLRSSDLYRHQRLH), 379–401 (YECTVCKKRFTRRSHLIGHQRTH), 407–429 (YKCLECGKSFCHGSSLKRHLKTH), 435–457 (HRCHNCGKSFSRLTALTLHQRTH), 463–485 (FKCNYCGKSFRQRPSLVIHLRIH), and 491–513 (YKCTHCSKSFRQRAGLIMHQVTH).

The protein belongs to the krueppel C2H2-type zinc-finger protein family.

The protein resides in the nucleus. Its function is as follows. May be involved in transcriptional regulation. This Pan troglodytes (Chimpanzee) protein is Zinc finger protein 449 (ZNF449).